The chain runs to 153 residues: Putative pre-16S rRNA nuclease (153 aa).

The protein belongs to the YqgF nuclease family.

It is found in the cytoplasm. Could be a nuclease involved in processing of the 5'-end of pre-16S rRNA. In Prochlorococcus marinus (strain MIT 9215), this protein is Putative pre-16S rRNA nuclease.